The primary structure comprises 83 residues: Sec-independent protein translocase protein TatA (83 aa).

The chain crosses the membrane as a helical span at residues 2 to 22 (GLGGISIWQLLIVLVIVLLLF). 2 stretches are compositionally biased toward basic and acidic residues: residues 50–65 (AAKQ…KVAA) and 74–83 (AEQKEKTEAK). The disordered stretch occupies residues 50–83 (AAKQEAEEAEQKKVAAEEAAAAKTAEQKEKTEAK).

It belongs to the TatA/E family. The Tat system comprises two distinct complexes: a TatABC complex, containing multiple copies of TatA, TatB and TatC subunits, and a separate TatA complex, containing only TatA subunits. Substrates initially bind to the TatABC complex, which probably triggers association of the separate TatA complex to form the active translocon.

It is found in the cell inner membrane. Functionally, part of the twin-arginine translocation (Tat) system that transports large folded proteins containing a characteristic twin-arginine motif in their signal peptide across membranes. TatA could form the protein-conducting channel of the Tat system. The protein is Sec-independent protein translocase protein TatA of Saccharophagus degradans (strain 2-40 / ATCC 43961 / DSM 17024).